The primary structure comprises 253 residues: 5-oxoprolinase subunit A (253 aa).

It belongs to the LamB/PxpA family. As to quaternary structure, forms a complex composed of PxpA, PxpB and PxpC.

It carries out the reaction 5-oxo-L-proline + ATP + 2 H2O = L-glutamate + ADP + phosphate + H(+). Its function is as follows. Catalyzes the cleavage of 5-oxoproline to form L-glutamate coupled to the hydrolysis of ATP to ADP and inorganic phosphate. In Bacillus cereus (strain ATCC 10987 / NRS 248), this protein is 5-oxoprolinase subunit A.